Reading from the N-terminus, the 145-residue chain is 3-hydroxyacyl-[acyl-carrier-protein] dehydratase FabZ (145 aa).

Residue His49 is part of the active site.

This sequence belongs to the thioester dehydratase family. FabZ subfamily.

The protein resides in the cytoplasm. The enzyme catalyses a (3R)-hydroxyacyl-[ACP] = a (2E)-enoyl-[ACP] + H2O. Involved in unsaturated fatty acids biosynthesis. Catalyzes the dehydration of short chain beta-hydroxyacyl-ACPs and long chain saturated and unsaturated beta-hydroxyacyl-ACPs. The polypeptide is 3-hydroxyacyl-[acyl-carrier-protein] dehydratase FabZ (Rickettsia conorii (strain ATCC VR-613 / Malish 7)).